The primary structure comprises 368 residues: Methionine import ATP-binding protein MetN (368 aa).

Residues 5–260 (IELNNLSVQF…PKEALTKQFI (256 aa)) enclose the ABC transporter domain. 41-48 (GYSGAGKS) lines the ATP pocket.

This sequence belongs to the ABC transporter superfamily. Methionine importer (TC 3.A.1.24) family. As to quaternary structure, the complex is composed of two ATP-binding proteins (MetN), two transmembrane proteins (MetI) and a solute-binding protein (MetQ).

Its subcellular location is the cell membrane. The enzyme catalyses L-methionine(out) + ATP + H2O = L-methionine(in) + ADP + phosphate + H(+). It catalyses the reaction D-methionine(out) + ATP + H2O = D-methionine(in) + ADP + phosphate + H(+). Its function is as follows. Part of the ABC transporter complex MetNIQ involved in methionine import. Responsible for energy coupling to the transport system. This chain is Methionine import ATP-binding protein MetN, found in Lactococcus lactis subsp. lactis (strain IL1403) (Streptococcus lactis).